A 255-amino-acid chain; its full sequence is Large ribosomal subunit protein uL4 (255 aa).

This sequence belongs to the universal ribosomal protein uL4 family. As to quaternary structure, part of the 50S ribosomal subunit.

In terms of biological role, one of the primary rRNA binding proteins, this protein initially binds near the 5'-end of the 23S rRNA. It is important during the early stages of 50S assembly. It makes multiple contacts with different domains of the 23S rRNA in the assembled 50S subunit and ribosome. Functionally, forms part of the polypeptide exit tunnel. The chain is Large ribosomal subunit protein uL4 from Thermoplasma acidophilum (strain ATCC 25905 / DSM 1728 / JCM 9062 / NBRC 15155 / AMRC-C165).